We begin with the raw amino-acid sequence, 764 residues long: Complement factor B (764 aa).

The signal sequence occupies residues 1–25 (MGSNLSPQLCLMPFILGLLSGGVTT). 3 consecutive Sushi domains span residues 35-100 (GSCS…ECRA), 101-160 (IHCP…ICDN), and 163-220 (GYCS…SCQD). 6 disulfides stabilise this stretch: Cys37–Cys76, Cys62–Cys98, Cys103–Cys145, Cys131–Cys158, Cys165–Cys205, and Cys191–Cys218. N-linked (GlcNAc...) asparagine glycosylation is found at Asn122 and Asn142. The VWFA domain maps to 270–469 (NIYLVLDGSD…NLEDVFYQMI (200 aa)). Positions 278 and 280 each coordinate Mg(2+). Residues Ser278 and Ser280 each contribute to the Mn(2+) site. An N-linked (GlcNAc...) asparagine glycan is attached at Asn285. An N-linked (Glc) (glycation) lysine glycan is attached at Lys291. Thr353 lines the Mg(2+) pocket. Thr353 contributes to the Mn(2+) binding site. A glycan (N-linked (GlcNAc...) asparagine) is linked at Asn378. Positions 477-757 (LCGMVWEHRK…VLPWLKEKLQ (281 aa)) constitute a Peptidase S1 domain. 5 cysteine pairs are disulfide-bonded: Cys478–Cys596, Cys511–Cys527, Cys599–Cys615, Cys656–Cys682, and Cys695–Cys725. Active-site charge relay system residues include His526 and Asp576. Ser699 (charge relay system) is an active-site residue.

The protein belongs to the peptidase S1 family. In terms of assembly, monomer. Interacts with complement C3b; this interaction is dependent on the presence of Mg(2+). Catalytic component of the C3 convertase of the alternative complement pathway, also named C3bBb, composed of complement factor B Bb and complement C3b. Catalytic component of the C5 convertase of the alternative complement pathway, also named C3bBb3b, composed of complement factor B Bb and additional molecules of complement C3b. Interacts to CFP; this interaction contributes to the stabilization of the active C3-convertase enzyme complex. Requires Mg(2+) as cofactor. Mn(2+) is required as a cofactor. Cleaved by CFD following activation of the alternative complement system, generating Ba and Bb chains. Cleavage and activation takes place when CFB is already associated with complement C3b.

It is found in the secreted. The protein localises to the cell surface. The catalysed reaction is Cleavage of Arg-|-Ser bond in complement component C3 alpha-chain to yield C3a and C3b, and Arg-|-Xaa bond in complement component C5 alpha-chain to yield C5a and C5b.. Precursor of the catalytic component of the C3 and C5 convertase complexes of the alternative pathway of the complement system, a cascade of proteins that leads to phagocytosis and breakdown of pathogens and signaling that strengthens the adaptive immune system. The alternative complement pathway acts as an amplification loop that enhances other complement pathways (classical, lectin and GZMK) by promoting formation of additional C3 and C5 convertases. CFB is cleaved and activated by CFD to generate Ba and Bb chains; Bb chain constituting the catalytic component of the C3 and C5 convertases. In terms of biological role, serine protease component of the complement C3 and C5 convertase complexes of the alternative complement pathway. Following cleavage and activation by factor D (CFD), forms the C3 convertase together with complement C3b. As part of the C3 convertase, cleaves and activates C3 into C3a anaphylatoxin and C3b opsonin, the next components of the complement pathways. When an additional complement C3b molecule binds to the C3 convertase, forms the C5 convertase, which cleaves and activates C5 into C5a anaphylatoxin and C5b component of the membrane attack complex. Functionally, involved in proliferation and differentiation of preactivated B-lymphocytes, rapid spreading of peripheral blood monocytes, stimulation of lymphocyte blastogenesis and lysis of erythrocytes. This is Complement factor B from Homo sapiens (Human).